Here is a 1207-residue protein sequence, read N- to C-terminus: RNA-binding protein 20 (1207 aa).

The segment at 1 to 58 (MVLAAAMSQDADPSGPEQPDRDACIVPGVQGPPAPQGQQGMQPLPPPLPPPPQPQSSL) is disordered. The span at 43-54 (PLPPPLPPPPQP) shows a compositional bias: pro residues. The segment at 412 to 446 (HLPHICSICDKKVFDLKDWELHVKGKLHAQKCLLF) adopts a U1-type zinc-finger fold. Residues 521–596 (RVVHICNLPE…EKLLIRMSTR (76 aa)) form the RRM domain. Residues 625–637 (LREADRYGPERPR) show a composition bias toward basic and acidic residues. Disordered stretches follow at residues 625 to 686 (LREA…NGED), 722 to 896 (EKYL…MEEL), and 951 to 1110 (QGET…AELK). The tract at residues 631-650 (YGPERPRSRSPMSRSLSPRS) is RS. Phosphoserine occurs at positions 638, 640, 643, 645, and 652. Low complexity predominate over residues 639–650 (RSPMSRSLSPRS). A compositionally biased stretch (basic and acidic residues) spans 668–686 (YAWRDEDRETVPRRENGED). Position 729 is a phosphoserine (Ser-729). Basic and acidic residues-rich tracts occupy residues 740 to 759 (KGRE…DKHP), 772 to 789 (RKEE…PEDS), and 796 to 836 (EPKV…RGAE). Ser-789 is modified (phosphoserine). Residues 839–848 (AGTEEQEGME) are compositionally biased toward acidic residues. Phosphoserine occurs at positions 853 and 864. Residues 853–863 (SVGTQQEGTES) show a composition bias toward polar residues. Basic and acidic residues predominate over residues 867-876 (ENTRTKKGQD). Phosphoserine occurs at positions 879, 881, and 963. The segment covering 970-979 (VPSTSTSCPN) has biased composition (polar residues). At Ser-999 the chain carries Phosphoserine. Basic and acidic residues predominate over residues 1011–1022 (YEKEARGAEGSD). 7 positions are modified to phosphoserine: Ser-1034, Ser-1046, Ser-1057, Ser-1066, Ser-1078, Ser-1096, and Ser-1101. Over residues 1050–1072 (DDCKARGSPEDGPHEVSPLEEKA) the composition is skewed to basic and acidic residues. Polar residues predominate over residues 1073–1102 (SPTTESDLQSQACQENSRYTETRSLNSRSP). Residues 1141 to 1172 (FYCKLCGLFYTSEEAAKVSHCRSTVHYRNLQK) form a Matrin-type zinc finger. Residues 1181 to 1207 (GLKETEGVDSPSPERSGIGPHLERKKL) form a disordered region. 2 positions are modified to phosphoserine: Ser-1190 and Ser-1192.

Associates with components of the U1 and U2 U1 small nuclear ribonucleoprotein complexes. Post-translationally, phosphorylation regulates the subcellular localization. Phosphorylation of Ser-638 and Ser-640 in the RS (arginine/serine-rich) region promotes nuclear localization of the protein. In contrast, phosphorylation of the C-terminal disordered region promotes localization to cytoplasmic ribonucleoprotein granules.

The protein resides in the nucleus. The protein localises to the cytoplasm. Its subcellular location is the cytoplasmic ribonucleoprotein granule. In terms of biological role, RNA-binding protein that acts as a regulator of mRNA splicing of a subset of genes encoding key structural proteins involved in cardiac development, such as TTN (Titin), CACNA1C, CAMK2D or PDLIM5/ENH. Acts as a repressor of mRNA splicing: specifically binds the 5'UCUU-3' motif that is predominantly found within intronic sequences of pre-mRNAs, leading to the exclusion of specific exons in target transcripts. RBM20-mediated exon skipping is hormone-dependent and is essential for TTN isoform transition in both cardiac and skeletal muscles. RBM20-mediated exon skipping of TTN provides substrates for the formation of circular RNA (circRNAs) from the TTN transcripts. Together with RBM24, promotes the expression of short isoforms of PDLIM5/ENH in cardiomyocytes. The chain is RNA-binding protein 20 from Rattus norvegicus (Rat).